Here is a 110-residue protein sequence, read N- to C-terminus: Large ribosomal subunit protein uL24 (110 aa).

Belongs to the universal ribosomal protein uL24 family. As to quaternary structure, part of the 50S ribosomal subunit.

Functionally, one of two assembly initiator proteins, it binds directly to the 5'-end of the 23S rRNA, where it nucleates assembly of the 50S subunit. Its function is as follows. One of the proteins that surrounds the polypeptide exit tunnel on the outside of the subunit. The chain is Large ribosomal subunit protein uL24 from Chloroflexus aurantiacus (strain ATCC 29366 / DSM 635 / J-10-fl).